A 538-amino-acid chain; its full sequence is Cytochrome P450 monooxygenase okaG (538 aa).

Residues 3 to 23 traverse the membrane as a helical segment; that stretch reads LISPLAAVLSAMAIVLGLLFF. A heme-binding site is contributed by Cys484.

The protein belongs to the cytochrome P450 family. Heme is required as a cofactor.

It localises to the membrane. The enzyme catalyses 12-deshydroxyl okaramine E + 2 reduced [NADPH--hemoprotein reductase] + 2 O2 = 3-desmethyl okaramine B + 2 oxidized [NADPH--hemoprotein reductase] + 2 H2O + 2 H(+). It participates in alkaloid biosynthesis. Nonribosomal peptide synthetase; part of the gene cluster that mediates the biosynthesis of okaramine B, a prenylated indole alkaloid that possesses an unusual octacyclic ring system, including a four-membered azetidine ring and an eight-membered azocine ring, and that exhibits insecticidal activity against silkworm larvae. Within the pathway, okaG acts as a 2,3-diol synthase that installs 2,3-diol on the okaramine scaffold to convert 12-deshydroxyl okaramine E into 3-desmethyl okaramine B. OkaG is also able to produce use okaramine E and produce okaramine D with the help of the methyltransferase okaF. The biosynthesis begins with the NRPS okaA that condenses two tryptophan molecules into cyclo(L-Trp-L-Trp). Prenylation by the prenyltransferase okaC then leads to the formation of cyclo(N8-(alpha,alpha-dimethylallyl)-L-Trp-6a-(alpha,alpha-dime-thylallyl)-L-Trp). This is followed by indole 2,3-epoxidation by the FAD-dependent monooxygenase okaB to facilitate the formation of the hexahydropyrrolo[2,3-b]indole (HPI) moiety of okaramine C. The cytochrome P450 monooxygenase okaD then likely catalyzes formation of the eight-membered ring of okaramine A. The dioxygenase okaE further forms the unusual 2-dimethyl-3-methyl-azetidine ring to yield 12-deshydroxyl okaramine E, as well as the hydroxylation of 12-deshydroxyl okaramine E to produce okaramine E. The cytochrome P450 monoxygenase okaG converts 12-deshydroxyl okaramine E into 3-desmethyl okaramine B which is further methylated by the methyltransferase okaF into okaramine B. In a shunt pathway, okaG and okaF together are also able to convert okaramine E into okaramine D. Okaramine H is produced by nonenzymatic conversion from okaramine A. This is Cytochrome P450 monooxygenase okaG from Penicillium ochrochloron.